We begin with the raw amino-acid sequence, 319 residues long: Acetyl-coenzyme A carboxylase carboxyl transferase subunit alpha (319 aa).

Residues Leu43 to Glu296 form the CoA carboxyltransferase C-terminal domain.

The protein belongs to the AccA family. As to quaternary structure, acetyl-CoA carboxylase is a heterohexamer composed of biotin carboxyl carrier protein (AccB), biotin carboxylase (AccC) and two subunits each of ACCase subunit alpha (AccA) and ACCase subunit beta (AccD).

The protein resides in the cytoplasm. It catalyses the reaction N(6)-carboxybiotinyl-L-lysyl-[protein] + acetyl-CoA = N(6)-biotinyl-L-lysyl-[protein] + malonyl-CoA. The protein operates within lipid metabolism; malonyl-CoA biosynthesis; malonyl-CoA from acetyl-CoA: step 1/1. Functionally, component of the acetyl coenzyme A carboxylase (ACC) complex. First, biotin carboxylase catalyzes the carboxylation of biotin on its carrier protein (BCCP) and then the CO(2) group is transferred by the carboxyltransferase to acetyl-CoA to form malonyl-CoA. The chain is Acetyl-coenzyme A carboxylase carboxyl transferase subunit alpha from Baumannia cicadellinicola subsp. Homalodisca coagulata.